The chain runs to 537 residues: CTP synthase (537 aa).

Residues 1 to 268 (MSTKYIFVTG…DQIVCDHLKL (268 aa)) form an amidoligase domain region. Residue S14 participates in CTP binding. Residue S14 coordinates UTP. Residue 15 to 20 (SIGKGI) coordinates ATP. Position 55 (Y55) interacts with L-glutamine. D72 serves as a coordination point for ATP. Mg(2+)-binding residues include D72 and E142. CTP is bound by residues 149–151 (DIE), 189–194 (KTKPTQ), and K225. UTP contacts are provided by residues 189–194 (KTKPTQ) and K225. Positions 293-536 (RIALVGKYVE…VTAAVEKSSD (244 aa)) constitute a Glutamine amidotransferase type-1 domain. G355 contacts L-glutamine. C382 (nucleophile; for glutamine hydrolysis) is an active-site residue. Residues 383–386 (LGMQ), E406, and R464 each bind L-glutamine. Residues H509 and E511 contribute to the active site.

It belongs to the CTP synthase family. Homotetramer.

The enzyme catalyses UTP + L-glutamine + ATP + H2O = CTP + L-glutamate + ADP + phosphate + 2 H(+). It catalyses the reaction L-glutamine + H2O = L-glutamate + NH4(+). It carries out the reaction UTP + NH4(+) + ATP = CTP + ADP + phosphate + 2 H(+). Its pathway is pyrimidine metabolism; CTP biosynthesis via de novo pathway; CTP from UDP: step 2/2. Allosterically activated by GTP, when glutamine is the substrate; GTP has no effect on the reaction when ammonia is the substrate. The allosteric effector GTP functions by stabilizing the protein conformation that binds the tetrahedral intermediate(s) formed during glutamine hydrolysis. Inhibited by the product CTP, via allosteric rather than competitive inhibition. Catalyzes the ATP-dependent amination of UTP to CTP with either L-glutamine or ammonia as the source of nitrogen. Regulates intracellular CTP levels through interactions with the four ribonucleotide triphosphates. The sequence is that of CTP synthase from Streptococcus sanguinis (strain SK36).